The following is a 142-amino-acid chain: Large ribosomal subunit protein uL11 (142 aa).

The protein belongs to the universal ribosomal protein uL11 family. In terms of assembly, part of the ribosomal stalk of the 50S ribosomal subunit. Interacts with L10 and the large rRNA to form the base of the stalk. L10 forms an elongated spine to which L12 dimers bind in a sequential fashion forming a multimeric L10(L12)X complex. One or more lysine residues are methylated.

Forms part of the ribosomal stalk which helps the ribosome interact with GTP-bound translation factors. This Yersinia pestis bv. Antiqua (strain Angola) protein is Large ribosomal subunit protein uL11.